Consider the following 719-residue polypeptide: Putative alpha-1,3-mannosyltransferase MNT4 (719 aa).

The Cytoplasmic portion of the chain corresponds to 1 to 4; the sequence is MKFH. The chain crosses the membrane as a helical span at residues 5–22; sequence LKRYVIVTSILLSFFLLF. Residues 23–719 are Lumenal-facing; that stretch reads RRQFLPLTQR…KKLIEIWLQD (697 aa). N-linked (GlcNAc...) asparagine glycans are attached at residues Asn-148, Asn-273, and Asn-449.

This sequence belongs to the MNN1/MNT family.

The protein localises to the golgi apparatus membrane. It participates in protein modification; protein glycosylation. Functionally, responsible for addition of the terminal mannose residues to the outer chain of core N-linked polysaccharides and to O-linked mannotriose. Implicated in late Golgi modifications. This chain is Putative alpha-1,3-mannosyltransferase MNT4 (MNT4), found in Candida albicans (strain SC5314 / ATCC MYA-2876) (Yeast).